Here is a 364-residue protein sequence, read N- to C-terminus: Anthranilate phosphoribosyltransferase 1 (364 aa).

5-phospho-alpha-D-ribose 1-diphosphate is bound by residues G102, 105-106 (GD), T110, 112-115 (NIST), 130-138 (KHGNRSASS), and S142. Position 102 (G102) interacts with anthranilate. S114 is a Mg(2+) binding site. Residue N133 participates in anthranilate binding. Position 188 (R188) interacts with anthranilate. The Mg(2+) site is built by D247 and E248.

Belongs to the anthranilate phosphoribosyltransferase family. In terms of assembly, homodimer. Requires Mg(2+) as cofactor.

It carries out the reaction N-(5-phospho-beta-D-ribosyl)anthranilate + diphosphate = 5-phospho-alpha-D-ribose 1-diphosphate + anthranilate. The protein operates within amino-acid biosynthesis; L-tryptophan biosynthesis; L-tryptophan from chorismate: step 2/5. In terms of biological role, catalyzes the transfer of the phosphoribosyl group of 5-phosphorylribose-1-pyrophosphate (PRPP) to anthranilate to yield N-(5'-phosphoribosyl)-anthranilate (PRA). This chain is Anthranilate phosphoribosyltransferase 1, found in Nostoc sp. (strain PCC 7120 / SAG 25.82 / UTEX 2576).